Here is a 161-residue protein sequence, read N- to C-terminus: 2-C-methyl-D-erythritol 2,4-cyclodiphosphate synthase (161 aa).

D10 and H12 together coordinate a divalent metal cation. Residues 10-12 and 36-37 contribute to the 4-CDP-2-C-methyl-D-erythritol 2-phosphate site; these read DVH and HS. H44 contacts a divalent metal cation. 4-CDP-2-C-methyl-D-erythritol 2-phosphate is bound by residues 58-60, 63-67, 102-108, 134-137, F141, and R144; these read DIG, FPDTD, AQVPKMA, and TTTE.

The protein belongs to the IspF family. Homotrimer. Requires a divalent metal cation as cofactor.

It carries out the reaction 4-CDP-2-C-methyl-D-erythritol 2-phosphate = 2-C-methyl-D-erythritol 2,4-cyclic diphosphate + CMP. It participates in isoprenoid biosynthesis; isopentenyl diphosphate biosynthesis via DXP pathway; isopentenyl diphosphate from 1-deoxy-D-xylulose 5-phosphate: step 4/6. Its function is as follows. Involved in the biosynthesis of isopentenyl diphosphate (IPP) and dimethylallyl diphosphate (DMAPP), two major building blocks of isoprenoid compounds. Catalyzes the conversion of 4-diphosphocytidyl-2-C-methyl-D-erythritol 2-phosphate (CDP-ME2P) to 2-C-methyl-D-erythritol 2,4-cyclodiphosphate (ME-CPP) with a corresponding release of cytidine 5-monophosphate (CMP). The chain is 2-C-methyl-D-erythritol 2,4-cyclodiphosphate synthase from Shewanella baltica (strain OS223).